Consider the following 258-residue polypeptide: SMH class II histocompatibility antigen, beta-1 chain (258 aa).

Positions M1–G29 are cleaved as a signal peptide. Residues R30–I121 are beta-1. The Extracellular portion of the chain corresponds to R30–K225. 2 cysteine pairs are disulfide-bonded: C44–C106 and C144–C200. The interval A122–W215 is beta-2. In terms of domain architecture, Ig-like C1-type spans P124–T212. The segment at R216–K225 is connecting peptide. N-linked (GlcNAc...) asparagine glycosylation occurs at N224. A helical membrane pass occupies residues T226–M246. At H247–R258 the chain is on the cytoplasmic side.

This sequence belongs to the MHC class II family.

It localises to the membrane. The sequence is that of SMH class II histocompatibility antigen, beta-1 chain from Spalax ehrenbergi (Middle East blind mole rat).